A 247-amino-acid polypeptide reads, in one-letter code: Neurotrophic factor BDNF precursor form (247 aa).

Residues 1-18 form the signal peptide; that stretch reads MTILFLTMVISYFGCMKA. The propeptide occupies 19 to 128; that stretch reads APMKEANARG…AANMSMRVRR (110 aa). N121 is a glycosylation site (N-linked (GlcNAc...) asparagine). 3 disulfide bridges follow: C141–C208, C186–C237, and C196–C239.

The protein belongs to the NGF-beta family. Monomers and homodimers. Binds to NTRK2/TRKB. Can form heterodimers with other neurotrophin family members, such as NTF3 and NTF4 (in vitro), but the physiological relevance of this is not clear. BDNF precursor form: interacts with the heterodimer formed by NGFR and SORCS2. Mature BDNF has much lower affinity for the heterodimer formed by NGFR and SORCS2. In terms of processing, N-glycosylated and glycosulfated, contrary to mature BDNF. Mature BDNF is produced by proteolytic removal of the propeptide, catalyzed by a FURIN family member. In addition, the precursor form is proteolytically cleaved within the propeptide, but this is not an obligatory intermediate for the production of mature BDNF. Can be converted into mature BDNF by plasmin (PLG).

It is found in the secreted. Important signaling molecule that activates signaling cascades downstream of NTRK2. During development, promotes the survival and differentiation of selected neuronal populations of the peripheral and central nervous systems. Participates in axonal growth, pathfinding and in the modulation of dendritic growth and morphology. Major regulator of synaptic transmission and plasticity at adult synapses in many regions of the CNS. The versatility of BDNF is emphasized by its contribution to a range of adaptive neuronal responses including long-term potentiation (LTP), long-term depression (LTD), certain forms of short-term synaptic plasticity, as well as homeostatic regulation of intrinsic neuronal excitability. In terms of biological role, important signaling molecule that activates signaling cascades downstream of NTRK2. Activates signaling cascades via the heterodimeric receptor formed by NGFR and SORCS2. Signaling via NGFR and SORCS2 plays a role in synaptic plasticity and long-term depression (LTD). Binding to NGFR and SORCS2 promotes neuronal apoptosis. Promotes neuronal growth cone collapse. The sequence is that of Neurotrophic factor BDNF precursor form (BDNF) from Equus caballus (Horse).